The following is a 173-amino-acid chain: MSEKVCIGKIVGVYGVKGWLKVRSFTSPPENMLRYANWELVREDGNRSSAKLRSGKPQGKGIVIALAGVDDRNLAKSYVGCQIEIESSELPALEEGEYYWRQLEGLTVFTSEGVNIGRVSHLIETGANDVLVVIGSAESIDKRERLIPYLPGQFIENIDLDKNLMVVDWDPDF.

A PRC barrel domain is found at 95 to 173; that stretch reads EGEYYWRQLE…LMVVDWDPDF (79 aa).

Belongs to the RimM family. Binds ribosomal protein uS19.

It localises to the cytoplasm. Its function is as follows. An accessory protein needed during the final step in the assembly of 30S ribosomal subunit, possibly for assembly of the head region. Essential for efficient processing of 16S rRNA. May be needed both before and after RbfA during the maturation of 16S rRNA. It has affinity for free ribosomal 30S subunits but not for 70S ribosomes. This chain is Ribosome maturation factor RimM, found in Hahella chejuensis (strain KCTC 2396).